The sequence spans 292 residues: Protease HtpX (292 aa).

The next 2 membrane-spanning stretches (helical) occupy residues 5 to 25 and 34 to 54; these read IFLFLLTNLAVLMLAGIVMSL and SGLLVMAAIFGFGGSFISLLL. A Zn(2+)-binding site is contributed by His140. Glu141 is an active-site residue. His144 provides a ligand contact to Zn(2+). The next 2 helical transmembrane spans lie at 155–175 and 193–213; these read LLQGVLNTFVIVLARVVGGII and IIVFALEMVFGLFATMIAMWF. Glu218 contributes to the Zn(2+) binding site.

The protein belongs to the peptidase M48B family. Zn(2+) is required as a cofactor.

The protein localises to the cell inner membrane. The chain is Protease HtpX from Xanthomonas euvesicatoria pv. vesicatoria (strain 85-10) (Xanthomonas campestris pv. vesicatoria).